We begin with the raw amino-acid sequence, 348 residues long: Dihydroorotase (348 aa).

2 residues coordinate Zn(2+): H17 and H19. Substrate is bound by residues 19–21 and N45; that span reads HLR. Zn(2+) is bound by residues K103, H140, and H178. K103 carries the post-translational modification N6-carboxylysine. H140 is a binding site for substrate. L223 contributes to the substrate binding site. Zn(2+) is bound at residue D251. D251 is an active-site residue. Residues H255 and A267 each coordinate substrate.

This sequence belongs to the metallo-dependent hydrolases superfamily. DHOase family. Class II DHOase subfamily. Homodimer. Requires Zn(2+) as cofactor.

It catalyses the reaction (S)-dihydroorotate + H2O = N-carbamoyl-L-aspartate + H(+). It participates in pyrimidine metabolism; UMP biosynthesis via de novo pathway; (S)-dihydroorotate from bicarbonate: step 3/3. In terms of biological role, catalyzes the reversible cyclization of carbamoyl aspartate to dihydroorotate. This is Dihydroorotase from Yersinia enterocolitica serotype O:8 / biotype 1B (strain NCTC 13174 / 8081).